The primary structure comprises 187 residues: Ribosome maturation factor RimM (187 aa).

Positions 91–183 (DDGFYDHELE…ILVLTPPEGL (93 aa)) constitute a PRC barrel domain.

The protein belongs to the RimM family. In terms of assembly, binds ribosomal protein uS19.

It is found in the cytoplasm. Its function is as follows. An accessory protein needed during the final step in the assembly of 30S ribosomal subunit, possibly for assembly of the head region. Essential for efficient processing of 16S rRNA. May be needed both before and after RbfA during the maturation of 16S rRNA. It has affinity for free ribosomal 30S subunits but not for 70S ribosomes. The protein is Ribosome maturation factor RimM of Corynebacterium jeikeium (strain K411).